Consider the following 143-residue polypeptide: Small ribosomal subunit protein eS12 (143 aa).

Glycyl lysine isopeptide (Lys-Gly) (interchain with G-Cter in ubiquitin) cross-links involve residues Lys85, Lys95, and Lys114.

This sequence belongs to the eukaryotic ribosomal protein eS12 family. Component of the small ribosomal subunit (SSU). Mature yeast ribosomes consist of a small (40S) and a large (60S) subunit. The 40S small subunit contains 1 molecule of ribosomal RNA (18S rRNA) and 33 different proteins (encoded by 57 genes). The large 60S subunit contains 3 rRNA molecules (25S, 5.8S and 5S rRNA) and 46 different proteins (encoded by 81 genes).

The protein localises to the cytoplasm. In terms of biological role, component of the ribosome, a large ribonucleoprotein complex responsible for the synthesis of proteins in the cell. The small ribosomal subunit (SSU) binds messenger RNAs (mRNAs) and translates the encoded message by selecting cognate aminoacyl-transfer RNA (tRNA) molecules. The large subunit (LSU) contains the ribosomal catalytic site termed the peptidyl transferase center (PTC), which catalyzes the formation of peptide bonds, thereby polymerizing the amino acids delivered by tRNAs into a polypeptide chain. The nascent polypeptides leave the ribosome through a tunnel in the LSU and interact with protein factors that function in enzymatic processing, targeting, and the membrane insertion of nascent chains at the exit of the ribosomal tunnel. The chain is Small ribosomal subunit protein eS12 from Saccharomyces cerevisiae (strain ATCC 204508 / S288c) (Baker's yeast).